The following is a 346-amino-acid chain: Probable choline kinase 3 (346 aa).

Residues R71, Q207, and D224 each coordinate ATP.

This sequence belongs to the choline/ethanolamine kinase family.

It carries out the reaction choline + ATP = phosphocholine + ADP + H(+). It functions in the pathway phospholipid metabolism; phosphatidylcholine biosynthesis; phosphocholine from choline: step 1/1. Involved in phospholipid biosynthesis. Catalyzes the first step in phosphatidylcholine biosynthesis. This is Probable choline kinase 3 from Arabidopsis thaliana (Mouse-ear cress).